Here is a 657-residue protein sequence, read N- to C-terminus: Acetyl-coenzyme A synthetase (657 aa).

CoA is bound by residues 192-195 and threonine 311; that span reads RRGK. ATP contacts are provided by residues 387–389, 411–416, aspartate 504, arginine 519, and arginine 530; these read GEP and DTWWQT. Mg(2+) is bound by residues histidine 543 and valine 546. A CoA-binding site is contributed by arginine 592. Lysine 617 bears the N6-acetyllysine mark.

The protein belongs to the ATP-dependent AMP-binding enzyme family. Mg(2+) is required as a cofactor. Acetylated. Deacetylation by the SIR2-homolog deacetylase activates the enzyme.

It catalyses the reaction acetate + ATP + CoA = acetyl-CoA + AMP + diphosphate. Functionally, catalyzes the conversion of acetate into acetyl-CoA (AcCoA), an essential intermediate at the junction of anabolic and catabolic pathways. AcsA undergoes a two-step reaction. In the first half reaction, AcsA combines acetate with ATP to form acetyl-adenylate (AcAMP) intermediate. In the second half reaction, it can then transfer the acetyl group from AcAMP to the sulfhydryl group of CoA, forming the product AcCoA. This is Acetyl-coenzyme A synthetase from Campylobacter jejuni subsp. jejuni serotype O:2 (strain ATCC 700819 / NCTC 11168).